A 527-amino-acid chain; its full sequence is Bifunctional purine biosynthesis protein PurH (527 aa).

Residues 8–156 (AGAKRPIRRA…KNHPSVAVVV (149 aa)) enclose the MGS-like domain.

The protein belongs to the PurH family.

The enzyme catalyses (6R)-10-formyltetrahydrofolate + 5-amino-1-(5-phospho-beta-D-ribosyl)imidazole-4-carboxamide = 5-formamido-1-(5-phospho-D-ribosyl)imidazole-4-carboxamide + (6S)-5,6,7,8-tetrahydrofolate. The catalysed reaction is IMP + H2O = 5-formamido-1-(5-phospho-D-ribosyl)imidazole-4-carboxamide. It functions in the pathway purine metabolism; IMP biosynthesis via de novo pathway; 5-formamido-1-(5-phospho-D-ribosyl)imidazole-4-carboxamide from 5-amino-1-(5-phospho-D-ribosyl)imidazole-4-carboxamide (10-formyl THF route): step 1/1. The protein operates within purine metabolism; IMP biosynthesis via de novo pathway; IMP from 5-formamido-1-(5-phospho-D-ribosyl)imidazole-4-carboxamide: step 1/1. The sequence is that of Bifunctional purine biosynthesis protein PurH from Mycobacterium sp. (strain JLS).